Consider the following 393-residue polypeptide: MNSKKRGDETLKVLHICRQFSPSVGGLEDSLLNLARSQRQRLGIDAEVLTLDTVFGRPGKLPHRDVVDGIPVTRLAWRGSTKYPLAPQVLRHIGGFDLLHVHAIDFFFDFLAWTWPLHRKTMIASTHGGFFHTGALRRIKEIWFRTITPISVRAYKKIVACSYSDADLFRHVAAGRLITIENGINQTRFRDAASRTPNRTILAFGRFAVHKRLKLLFQLVALLRAYNSGWNIIVAGQDSNLTADDLRAQARACGIEDSLRIVSGPSDAELRGLMGEASFFGCLSAHEGFGLAAVEAMSAGLVPILSNITPFARLMQQGAAGVMVNPDNLAPGAREAEDMAAALPETADALRARNMDVASRYDWHSVAHEYARLYQQVLGRALPEANMAAAGAE.

This sequence belongs to the glycosyltransferase group 1 family. Glycosyltransferase 4 subfamily.

It carries out the reaction beta-D-Glc-(1-&gt;4)-alpha-D-Glc-di-trans,octa-cis-undecaprenyl diphosphate + GDP-alpha-D-mannose = alpha-D-Man-(1-&gt;3)-beta-D-Glc-(1-&gt;4)-alpha-D-Glc-1-di-trans,octa-cis-undecaprenyl diphosphate + GDP + H(+). Its function is as follows. Involved in the biosynthesis of the exopolysaccharide acetan, a water-soluble polysaccharide involved in production of bacterial cellulose (BC). This chain is GDP-mannose:cellobiosyl-diphosphopolyprenol alpha-mannosyltransferase (aceC), found in Komagataeibacter xylinus (Gluconacetobacter xylinus).